We begin with the raw amino-acid sequence, 223 residues long: Membrane-associated progesterone receptor component 2 (223 aa).

The interval 1–33 (MAAGDGDVKLGTLGSGSESSNDGGSESPGDAGA) is disordered. Ser15 carries O-linked (Xyl...) (chondroitin sulfate) serine glycosylation. Low complexity predominate over residues 15 to 33 (SGSESSNDGGSESPGDAGA). Residues 42–66 (AAALALLTGGGEMLLNVALVALVLL) form a helical membrane-spanning segment. Ser90, Ser104, and Ser208 each carry phosphoserine. The Cytochrome b5 heme-binding domain maps to 102–201 (DFSLEQLRQY…EKYDYVGRLL (100 aa)). The segment at 202-223 (KPGEEPSEYTDEEDTKDHNKQD) is disordered. Acidic residues predominate over residues 206-215 (EPSEYTDEED). Position 210 is a phosphotyrosine (Tyr210). Thr211 is subject to Phosphothreonine.

Belongs to the cytochrome b5 family. MAPR subfamily. As to quaternary structure, interacts with PGRMC1. Interacts with AAAS. Expressed by endometrial glands and stroma (at protein level). Detected in urine (at protein level).

It is found in the membrane. The protein localises to the nucleus envelope. The protein resides in the endoplasmic reticulum. It localises to the secreted. In terms of biological role, required for the maintenance of uterine histoarchitecture and normal female reproductive lifespan. May serve as a universal non-classical progesterone receptor in the uterus. Intracellular heme chaperone required for delivery of labile, or signaling heme, to the nucleus. Plays a role in adipocyte function and systemic glucose homeostasis. In brown fat, which has a high demand for heme, delivery of labile heme in the nucleus regulates the activity of heme-responsive transcriptional repressors such as NR1D1 and BACH1. In Homo sapiens (Human), this protein is Membrane-associated progesterone receptor component 2.